Reading from the N-terminus, the 217-residue chain is uncharacterized protein (217 aa).

The 106-residue stretch at 98–203 (QRRQYVRTDA…GDQQALLQYC (106 aa)) folds into the PilZ domain.

This is an uncharacterized protein from Bacillus subtilis (strain 168).